The following is a 567-amino-acid chain: DNA ligase B (567 aa).

Catalysis depends on lysine 132, which acts as the N6-AMP-lysine intermediate.

This sequence belongs to the NAD-dependent DNA ligase family. LigB subfamily.

It catalyses the reaction NAD(+) + (deoxyribonucleotide)n-3'-hydroxyl + 5'-phospho-(deoxyribonucleotide)m = (deoxyribonucleotide)n+m + AMP + beta-nicotinamide D-nucleotide.. Catalyzes the formation of phosphodiester linkages between 5'-phosphoryl and 3'-hydroxyl groups in double-stranded DNA using NAD as a coenzyme and as the energy source for the reaction. The polypeptide is DNA ligase B (Yersinia pseudotuberculosis serotype O:1b (strain IP 31758)).